A 523-amino-acid chain; its full sequence is REST corepressor 2 (523 aa).

Positions 1-43 (MPSVMEKPSAGSGILSRSRAKTAPNGGQPHSEDDSSEEEHSHD) are disordered. Residues 30-43 (HSEDDSSEEEHSHD) are compositionally biased toward basic and acidic residues. Phosphoserine is present on residues S31, S35, S36, and S63. An ELM2 domain is found at 44–129 (SMIRVGTNYQ…KSLADLANFT (86 aa)). Residue K88 forms a Glycyl lysine isopeptide (Lys-Gly) (interchain with G-Cter in SUMO2) linkage. Residues 130–181 (PFPDEWTVEDKVLFEQAFGFHGKCFQRIQQMLPDKVIPSLVKYYYSWKKTRS) enclose the SANT 1 domain. Residues 185–244 (VMDRQARRLGGRKDKEDSDELEEGRGAVSEGEPDTGDPKREPLPSRPLNARPGPGKKEVQ) form a disordered region. S202 carries the phosphoserine modification. Residues 283-314 (TLRGLDSQLISLKRQVQSMKQTNSSLRQALEG) adopt a coiled-coil conformation. Residues 327 to 378 (KFNSRWTTDEQLLAVQAIRRYGKDFGAIAEVIGNKTLTQVKTFFVSYRRRFN) form the SANT 2 domain. Positions 387 to 523 (EAEQDGAPAA…APLEPPAPSL (137 aa)) are disordered. The span at 432–459 (SVPPAPPPPPPPTSLSQPPPLLRPPLPT) shows a compositional bias: pro residues. The span at 460 to 482 (APTLLRQPPPLQQGRFLQPRLAP) shows a compositional bias: low complexity. R479 carries the asymmetric dimethylarginine modification. A compositionally biased stretch (pro residues) spans 504–523 (GPQPPPTLVGAPLEPPAPSL).

It belongs to the CoREST family. In terms of tissue distribution, predominantly, but not exclusively, expressed in neural tissue. Strongly expressed in neural domains of the developing brain of the developing mouse CNS.

The protein resides in the nucleus. Its function is as follows. May act as a component of a corepressor complex that represses transcription. In Mus musculus (Mouse), this protein is REST corepressor 2 (Rcor2).